The sequence spans 223 residues: 3,4-dihydroxy-2-butanone 4-phosphate synthase (223 aa).

D-ribulose 5-phosphate is bound by residues Arg47–Glu48, Asp52, Arg160–Thr164, and Glu184. A Mg(2+)-binding site is contributed by Glu48. His163 serves as a coordination point for Mg(2+).

This sequence belongs to the DHBP synthase family. In terms of assembly, homodimer. Mg(2+) serves as cofactor. Requires Mn(2+) as cofactor.

The catalysed reaction is D-ribulose 5-phosphate = (2S)-2-hydroxy-3-oxobutyl phosphate + formate + H(+). The protein operates within cofactor biosynthesis; riboflavin biosynthesis; 2-hydroxy-3-oxobutyl phosphate from D-ribulose 5-phosphate: step 1/1. In terms of biological role, catalyzes the conversion of D-ribulose 5-phosphate to formate and 3,4-dihydroxy-2-butanone 4-phosphate. The protein is 3,4-dihydroxy-2-butanone 4-phosphate synthase of Cupriavidus pinatubonensis (strain JMP 134 / LMG 1197) (Cupriavidus necator (strain JMP 134)).